A 296-amino-acid polypeptide reads, in one-letter code: MLTFQEIILKLHHYWASKGCAIIQPLDMEVGAGTFHPATTLRAIGPEPWTAAYVQPSRRPTDGRYGENPNRTQHYYQYQVVMKPSPDDIQELYLGSLRELGIDPLENDIRFVEDNWESPTLGAWGLGWEVWSNGMEITQFTYFQQVGGLECKPVMGEITYGLERLAMYIQNVDSMYDILWANTQNGPLYYRDVFLQNEIEMSTYNFEEANVEELFKQFDLLEKEGYRLVGKNLPIPAYEFVLKASHTFNLLDARHAISVTERQGYILRVRKLALEVAKEYYSAREKLGFPAFKKNN.

It belongs to the class-II aminoacyl-tRNA synthetase family. Tetramer of two alpha and two beta subunits.

It localises to the cytoplasm. It carries out the reaction tRNA(Gly) + glycine + ATP = glycyl-tRNA(Gly) + AMP + diphosphate. The chain is Glycine--tRNA ligase alpha subunit from Francisella philomiragia subsp. philomiragia (strain ATCC 25017 / CCUG 19701 / FSC 153 / O#319-036).